The sequence spans 253 residues: Adenosylcobinamide-GDP ribazoletransferase (253 aa).

4 helical membrane passes run 33–53, 106–126, 132–152, and 178–198; these read ISPLIIGISLALIESAVYVLL, IGSGGIGLLLVYLSIQIVALL, FYTIFHLISSNVLSMTIGLYI, and VLLLELIPFISLYNIIVFLVF.

The protein belongs to the CobS family. Mg(2+) is required as a cofactor.

The protein resides in the cell membrane. The enzyme catalyses alpha-ribazole + adenosylcob(III)inamide-GDP = adenosylcob(III)alamin + GMP + H(+). It catalyses the reaction alpha-ribazole 5'-phosphate + adenosylcob(III)inamide-GDP = adenosylcob(III)alamin 5'-phosphate + GMP + H(+). The protein operates within cofactor biosynthesis; adenosylcobalamin biosynthesis; adenosylcobalamin from cob(II)yrinate a,c-diamide: step 7/7. Functionally, joins adenosylcobinamide-GDP and alpha-ribazole to generate adenosylcobalamin (Ado-cobalamin). Also synthesizes adenosylcobalamin 5'-phosphate from adenosylcobinamide-GDP and alpha-ribazole 5'-phosphate. This is Adenosylcobinamide-GDP ribazoletransferase from Saccharolobus islandicus (strain Y.G.57.14 / Yellowstone #1) (Sulfolobus islandicus).